We begin with the raw amino-acid sequence, 196 residues long: Probable nicotinate-nucleotide adenylyltransferase (196 aa).

This sequence belongs to the NadD family.

It catalyses the reaction nicotinate beta-D-ribonucleotide + ATP + H(+) = deamido-NAD(+) + diphosphate. Its pathway is cofactor biosynthesis; NAD(+) biosynthesis; deamido-NAD(+) from nicotinate D-ribonucleotide: step 1/1. Catalyzes the reversible adenylation of nicotinate mononucleotide (NaMN) to nicotinic acid adenine dinucleotide (NaAD). In Thermotoga sp. (strain RQ2), this protein is Probable nicotinate-nucleotide adenylyltransferase.